A 263-amino-acid chain; its full sequence is L-aspartate dehydrogenase (263 aa).

Residues A120 and N186 each coordinate NAD(+). Residue H216 is part of the active site.

This sequence belongs to the L-aspartate dehydrogenase family.

The enzyme catalyses L-aspartate + NADP(+) + H2O = oxaloacetate + NH4(+) + NADPH + H(+). It carries out the reaction L-aspartate + NAD(+) + H2O = oxaloacetate + NH4(+) + NADH + H(+). Its pathway is cofactor biosynthesis; NAD(+) biosynthesis; iminoaspartate from L-aspartate (dehydrogenase route): step 1/1. Functionally, specifically catalyzes the NAD or NADP-dependent dehydrogenation of L-aspartate to iminoaspartate. This chain is L-aspartate dehydrogenase, found in Psychrobacter cryohalolentis (strain ATCC BAA-1226 / DSM 17306 / VKM B-2378 / K5).